Reading from the N-terminus, the 20-residue chain is M-poneritoxin-Ng1f (20 aa).

Lysine 20 bears the Lysine amide mark.

Expressed by the venom gland.

The protein localises to the secreted. It is found in the target cell membrane. Has activity against Gram-positive bacteria. Has insecticidal and hemolytic activities. May act by disrupting the integrity of the bacterial cell membrane. The protein is M-poneritoxin-Ng1f of Neoponera goeldii (Ponerine ant).